A 377-amino-acid polypeptide reads, in one-letter code: Early estrogen-induced gene 1 protein (377 aa).

One can recognise a C2 NT-type domain in the interval 2 to 145 (AFLTKKKKFK…ILKVNIGMSL (144 aa)). Composition is skewed to polar residues over residues 160–173 (KTVSPPGQDSSLQM), 188–198 (VRQNRSRQAML), and 222–234 (SRNSSQASQQSKI). Positions 160–313 (KTVSPPGQDS…SVESQPTWVD (154 aa)) are disordered. Positions 256 to 269 (TSTSSSVSGGLSLT) are enriched in low complexity. The segment covering 274–285 (EPERDVKPEKPP) has biased composition (basic and acidic residues).

The protein belongs to the EEIG family.

Its subcellular location is the nucleus. The protein resides in the cytoplasm. May be involved in osteoclast differentiation. The chain is Early estrogen-induced gene 1 protein (eeig1) from Xenopus laevis (African clawed frog).